We begin with the raw amino-acid sequence, 258 residues long: Axonemal dynein light intermediate polypeptide 1 (258 aa).

2 disordered regions span residues 1 to 60 (MIPP…CVPD) and 202 to 231 (DLERQVNEQKAKCEATEKRESERRQVEEKK). Residues 176-255 (MRKALQAEQG…LKAQLEGIIA (80 aa)) are a coiled coil.

Belongs to the inner dynein arm light chain family. As to quaternary structure, interacts with CFAP45. Interacts with DYNC1H1. Predominantly expressed in the testis, also detected at lower levels in several tissues expressing cilia. Strongly expressed in elongating spermatid cells (at protein level).

The protein localises to the cell projection. It is found in the cilium. The protein resides in the flagellum. Its subcellular location is the dynein axonemal particle. It localises to the cytoplasm. In terms of biological role, involved in sperm flagellum assembly. The protein is Axonemal dynein light intermediate polypeptide 1 of Mus musculus (Mouse).